The primary structure comprises 301 residues: Acetaldehyde dehydrogenase (301 aa).

Cys-130 functions as the Acyl-thioester intermediate in the catalytic mechanism. NAD(+) is bound by residues 161–169 (SVGPGTRRN) and Asn-272.

This sequence belongs to the acetaldehyde dehydrogenase family.

It catalyses the reaction acetaldehyde + NAD(+) + CoA = acetyl-CoA + NADH + H(+). The chain is Acetaldehyde dehydrogenase (mhpF) from Cupriavidus taiwanensis (strain DSM 17343 / BCRC 17206 / CCUG 44338 / CIP 107171 / LMG 19424 / R1) (Ralstonia taiwanensis (strain LMG 19424)).